A 259-amino-acid chain; its full sequence is Proteasome subunit alpha (259 aa).

Positions 222–259 (RITGPALEQLIPAEPAPASEPAPESKPDTETKPADPQD) are disordered. Residues 244-259 (PESKPDTETKPADPQD) show a composition bias toward basic and acidic residues.

This sequence belongs to the peptidase T1A family. The 20S proteasome core is composed of 14 alpha and 14 beta subunits that assemble into four stacked heptameric rings, resulting in a barrel-shaped structure. The two inner rings, each composed of seven catalytic beta subunits, are sandwiched by two outer rings, each composed of seven alpha subunits. The catalytic chamber with the active sites is on the inside of the barrel. Has a gated structure, the ends of the cylinder being occluded by the N-termini of the alpha-subunits. Is capped by the proteasome-associated ATPase, ARC.

The protein localises to the cytoplasm. It functions in the pathway protein degradation; proteasomal Pup-dependent pathway. The formation of the proteasomal ATPase ARC-20S proteasome complex, likely via the docking of the C-termini of ARC into the intersubunit pockets in the alpha-rings, may trigger opening of the gate for substrate entry. Interconversion between the open-gate and close-gate conformations leads to a dynamic regulation of the 20S proteasome proteolysis activity. Functionally, component of the proteasome core, a large protease complex with broad specificity involved in protein degradation. This Rhodococcus jostii (strain RHA1) protein is Proteasome subunit alpha.